The following is a 110-amino-acid chain: Large ribosomal subunit protein uL22 (110 aa).

Belongs to the universal ribosomal protein uL22 family. As to quaternary structure, part of the 50S ribosomal subunit.

Functionally, this protein binds specifically to 23S rRNA; its binding is stimulated by other ribosomal proteins, e.g. L4, L17, and L20. It is important during the early stages of 50S assembly. It makes multiple contacts with different domains of the 23S rRNA in the assembled 50S subunit and ribosome. In terms of biological role, the globular domain of the protein is located near the polypeptide exit tunnel on the outside of the subunit, while an extended beta-hairpin is found that lines the wall of the exit tunnel in the center of the 70S ribosome. The polypeptide is Large ribosomal subunit protein uL22 (Actinobacillus pleuropneumoniae serotype 5b (strain L20)).